Reading from the N-terminus, the 347-residue chain is NADH-quinone oxidoreductase subunit H (347 aa).

8 helical membrane passes run 14–34, 82–102, 115–135, 161–181, 198–218, 258–278, 285–305, and 321–341; these read IMIGQSLLLLVCLLVFIAYIL, AVFLLAPLVAVTLALATWAVI, VGILYVFAISSLEVYGIIMGG, IGFVIVTVLLCAGSLNLTDIV, LLDWHWLSLFPMFVIFFISAL, AIVLMCALTTILFLGGWLPPL, WVPGIIWFILKATLVFFMFGI, and LGWKVFLPLSLAMVVIVAFVL.

It belongs to the complex I subunit 1 family. NDH-1 is composed of 14 different subunits. Subunits NuoA, H, J, K, L, M, N constitute the membrane sector of the complex.

Its subcellular location is the cell inner membrane. It catalyses the reaction a quinone + NADH + 5 H(+)(in) = a quinol + NAD(+) + 4 H(+)(out). In terms of biological role, NDH-1 shuttles electrons from NADH, via FMN and iron-sulfur (Fe-S) centers, to quinones in the respiratory chain. The immediate electron acceptor for the enzyme in this species is believed to be ubiquinone. Couples the redox reaction to proton translocation (for every two electrons transferred, four hydrogen ions are translocated across the cytoplasmic membrane), and thus conserves the redox energy in a proton gradient. This subunit may bind ubiquinone. In Allorhizobium ampelinum (strain ATCC BAA-846 / DSM 112012 / S4) (Agrobacterium vitis (strain S4)), this protein is NADH-quinone oxidoreductase subunit H.